Reading from the N-terminus, the 281-residue chain is Large ribosomal subunit protein mL46 (281 aa).

The transit peptide at 1-19 (MKVNLMLKRGLATATATAS) directs the protein to the mitochondrion. A compositionally biased stretch (basic and acidic residues) spans 106-118 (RERSTKQEVKLSD). A disordered region spans residues 106 to 141 (RERSTKQEVKLSDDSTVAFSNNQKEQSKDDVNRPVI). The span at 119–129 (DSTVAFSNNQK) shows a compositional bias: polar residues.

This sequence belongs to the mitochondrion-specific ribosomal protein mL46 family. Component of the mitochondrial large ribosomal subunit (mt-LSU). Mature yeast 74S mitochondrial ribosomes consist of a small (37S) and a large (54S) subunit. The 37S small subunit contains a 15S ribosomal RNA (15S mt-rRNA) and 34 different proteins. The 54S large subunit contains a 21S rRNA (21S mt-rRNA) and 46 different proteins.

The protein localises to the mitochondrion. In terms of biological role, component of the mitochondrial ribosome (mitoribosome), a dedicated translation machinery responsible for the synthesis of mitochondrial genome-encoded proteins, including at least some of the essential transmembrane subunits of the mitochondrial respiratory chain. The mitoribosomes are attached to the mitochondrial inner membrane and translation products are cotranslationally integrated into the membrane. This chain is Large ribosomal subunit protein mL46 (MRPL17), found in Saccharomyces cerevisiae (strain ATCC 204508 / S288c) (Baker's yeast).